Consider the following 32-residue polypeptide: MSDIN-like toxin proprotein 2 (32 aa).

The propeptide occupies 1–10; it reads MSDINATRVP. Positions 11–17 form a cross-link, cyclopeptide (Ala-Pro); that stretch reads AWLAECP. The propeptide occupies 18–32; sequence CVGDDISHLLTRGEK.

The protein belongs to the MSDIN fungal toxin family. Processed by the macrocyclase-peptidase enzyme POPB to yield a toxic cyclic heptapeptide. POPB first removes 10 residues from the N-terminus. Conformational trapping of the remaining peptide forces the enzyme to release this intermediate rather than proceed to macrocyclization. The enzyme rebinds the remaining peptide in a different conformation and catalyzes macrocyclization of the N-terminal 7 residues.

Functionally, probable toxin that belongs to the MSDIN-like toxin family responsible for a large number of food poisoning cases and deaths. The chain is MSDIN-like toxin proprotein 2 from Amanita rimosa.